Consider the following 328-residue polypeptide: Carbonic anhydrase-related protein 11 (328 aa).

The first 22 residues, 1-22, serve as a signal peptide directing secretion; that stretch reads MGAAARLSAPRALVLWAALGAA. An Alpha-carbonic anhydrase domain is found at 33-303; that stretch reads DWWSYKDNLQ…LAHRALRGNR (271 aa). N-linked (GlcNAc...) asparagine glycans are attached at residues asparagine 118, asparagine 170, and asparagine 260. Residues 300-328 are disordered; sequence RGNRDPRHPERRCRGPNYRLHVDGAPHGR. Over residues 319–328 the composition is skewed to basic and acidic residues; that stretch reads LHVDGAPHGR.

Belongs to the alpha-carbonic anhydrase family.

Its subcellular location is the secreted. Functionally, does not have a catalytic activity. This chain is Carbonic anhydrase-related protein 11 (CA11), found in Bos taurus (Bovine).